A 314-amino-acid chain; its full sequence is 2,3-dihydroxyphenylpropionate/2,3-dihydroxicinnamic acid 1,2-dioxygenase (314 aa).

The Proton donor role is filled by histidine 115. Histidine 179 functions as the Proton acceptor in the catalytic mechanism.

Belongs to the LigB/MhpB extradiol dioxygenase family. Homotetramer. Requires Fe(2+) as cofactor.

It carries out the reaction 3-(2,3-dihydroxyphenyl)propanoate + O2 = (2Z,4E)-2-hydroxy-6-oxonona-2,4-dienedioate + H(+). It catalyses the reaction (2E)-3-(2,3-dihydroxyphenyl)prop-2-enoate + O2 = (2Z,4E,7E)-2-hydroxy-6-oxonona-2,4,7-trienedioate + H(+). The protein operates within aromatic compound metabolism; 3-phenylpropanoate degradation. Catalyzes the non-heme iron(II)-dependent oxidative cleavage of 2,3-dihydroxyphenylpropionic acid and 2,3-dihydroxicinnamic acid into 2-hydroxy-6-ketononadienedioate and 2-hydroxy-6-ketononatrienedioate, respectively. The protein is 2,3-dihydroxyphenylpropionate/2,3-dihydroxicinnamic acid 1,2-dioxygenase of Escherichia coli O81 (strain ED1a).